We begin with the raw amino-acid sequence, 92 residues long: Large ribosomal subunit protein bL27 (92 aa).

The propeptide occupies 1 to 8; it reads MLMNLQFF. The tract at residues 11-30 is disordered; that stretch reads HKGGGSTANGRDSAGRRLGA.

This sequence belongs to the bacterial ribosomal protein bL27 family. In terms of processing, the N-terminus is cleaved by ribosomal processing cysteine protease Prp.

This Lactiplantibacillus plantarum (strain ATCC BAA-793 / NCIMB 8826 / WCFS1) (Lactobacillus plantarum) protein is Large ribosomal subunit protein bL27.